The primary structure comprises 240 residues: UDP-2,3-diacylglucosamine hydrolase (240 aa).

Mn(2+)-binding residues include D8, H10, D41, N79, and H114. 79-80 (NR) lines the substrate pocket. Positions 122, 160, 164, 167, and 195 each coordinate substrate. The Mn(2+) site is built by H195 and H197.

It belongs to the LpxH family. It depends on Mn(2+) as a cofactor.

The protein localises to the cell inner membrane. The catalysed reaction is UDP-2-N,3-O-bis[(3R)-3-hydroxytetradecanoyl]-alpha-D-glucosamine + H2O = 2-N,3-O-bis[(3R)-3-hydroxytetradecanoyl]-alpha-D-glucosaminyl 1-phosphate + UMP + 2 H(+). It functions in the pathway glycolipid biosynthesis; lipid IV(A) biosynthesis; lipid IV(A) from (3R)-3-hydroxytetradecanoyl-[acyl-carrier-protein] and UDP-N-acetyl-alpha-D-glucosamine: step 4/6. In terms of biological role, hydrolyzes the pyrophosphate bond of UDP-2,3-diacylglucosamine to yield 2,3-diacylglucosamine 1-phosphate (lipid X) and UMP by catalyzing the attack of water at the alpha-P atom. Involved in the biosynthesis of lipid A, a phosphorylated glycolipid that anchors the lipopolysaccharide to the outer membrane of the cell. In Salmonella arizonae (strain ATCC BAA-731 / CDC346-86 / RSK2980), this protein is UDP-2,3-diacylglucosamine hydrolase.